A 270-amino-acid chain; its full sequence is MTMSFAANRARGEIRVRYEKHGGITRPLRLFETGGLRLRHPRAFQGCVGMIVNSAGGIAGGDHLRLAIEAEEQSELVIATPAAEKIYRARDKAAMLDLSLVLAPETKLAFLPQETILFDGAALSRRLDVTMANDASLLLVETLVLGRLAHGESAISCDFRDSWRIRRGGRLVFAEESRIEGPLNRTFDQPSLGHGRRAMAFLLAVAPDAEARLESLRARLAPFEPACPHGVSAWNGMLVARLMAASPEVLRCALLAGLGLWRDDIARLWL.

The protein belongs to the UreD family. UreD, UreF and UreG form a complex that acts as a GTP-hydrolysis-dependent molecular chaperone, activating the urease apoprotein by helping to assemble the nickel containing metallocenter of UreC. The UreE protein probably delivers the nickel.

It localises to the cytoplasm. Functionally, required for maturation of urease via the functional incorporation of the urease nickel metallocenter. In Beijerinckia indica subsp. indica (strain ATCC 9039 / DSM 1715 / NCIMB 8712), this protein is Urease accessory protein UreD.